We begin with the raw amino-acid sequence, 96 residues long: MTKSELIERLADKARHVPSRDVELAIKEMLEQMAQTLQKGERIEIRGFGSFSLHYRAPRVGRNPKTGETVELDGKHVPHFKPGKELRERVNEDLIA.

Positions 59–86 (RVGRNPKTGETVELDGKHVPHFKPGKEL) are disordered. The span at 72–86 (LDGKHVPHFKPGKEL) shows a compositional bias: basic and acidic residues.

Belongs to the bacterial histone-like protein family. Heterodimer of an alpha and a beta chain.

In terms of biological role, this protein is one of the two subunits of integration host factor, a specific DNA-binding protein that functions in genetic recombination as well as in transcriptional and translational control. The chain is Integration host factor subunit beta from Pseudoalteromonas atlantica (strain T6c / ATCC BAA-1087).